The primary structure comprises 249 residues: ATP synthase subunit a, chloroplastic (249 aa).

The next 5 helical transmembrane spans lie at Gln-40–Val-60, Val-97–Leu-117, Ile-136–Ser-156, Leu-201–Leu-221, and Gly-222–Gly-242.

This sequence belongs to the ATPase A chain family. As to quaternary structure, F-type ATPases have 2 components, CF(1) - the catalytic core - and CF(0) - the membrane proton channel. CF(1) has five subunits: alpha(3), beta(3), gamma(1), delta(1), epsilon(1). CF(0) has four main subunits: a, b, b' and c.

The protein resides in the plastid. Its subcellular location is the chloroplast thylakoid membrane. Its function is as follows. Key component of the proton channel; it plays a direct role in the translocation of protons across the membrane. The chain is ATP synthase subunit a, chloroplastic from Aethionema grandiflorum (Persian stone-cress).